We begin with the raw amino-acid sequence, 291 residues long: Serine hydrolase BPHL (291 aa).

A signal peptide spans 1–37 (MVAVLGGRGVLRLRLLLSALKPGIHVPRAGPAAAFGT). Residues 62-181 (AVLLLPGMLG…DSMIYEGIRD (120 aa)) form the AB hydrolase-1 domain. Residues lysine 86 and lysine 119 each carry the N6-acetyllysine modification. Lysine 126 carries the post-translational modification N6-acetyllysine; alternate. The residue at position 126 (lysine 126) is an N6-succinyllysine; alternate. The active-site Nucleophile is serine 139. Lysine 184 is subject to N6-succinyllysine. At lysine 191 the chain carries N6-acetyllysine; alternate. Lysine 191 is subject to N6-succinyllysine; alternate. Lysine 217 is subject to N6-acetyllysine. Mg(2+) is bound at residue aspartate 221. Lysine 243 is modified (N6-acetyllysine). The active-site Charge relay system is the aspartate 244. Lysine 260 and lysine 271 each carry N6-acetyllysine; alternate. Residues lysine 260 and lysine 271 each carry the N6-succinyllysine; alternate modification. Histidine 272 (charge relay system) is an active-site residue.

The protein belongs to the AB hydrolase superfamily. Lipase family. Monomer. May also form homodimers. As to expression, expressed at high levels in liver and kidney and lower levels in heart, intestine and skeletal muscle.

The protein resides in the mitochondrion. The catalysed reaction is L-homocysteine thiolactone + H2O = L-homocysteine + H(+). It catalyses the reaction valacyclovir + H2O = acyclovir + L-valine + H(+). Specific alpha-amino acid ester serine hydrolase that prefers small, hydrophobic, and aromatic side chains and does not have a stringent requirement for the leaving group other than preferring a primary alcohol. Has homocysteine-thiolactonase activity (in vitro) and may play a significant role in the detoxification of homocysteine thiolactone in vivo. Catalyzes the hydrolytic activation of amino acid ester prodrugs of nucleoside analogs such as valacyclovir and valganciclovir, converting them into their active forms (acyclovir and ganciclovir). This chain is Serine hydrolase BPHL (BPHL), found in Homo sapiens (Human).